The chain runs to 147 residues: Large ribosomal subunit protein uL15 (147 aa).

Over residues 1–10 the composition is skewed to polar residues; it reads MYLNTLSPNS. Residues 1–48 form a disordered region; sequence MYLNTLSPNSKSHKKSKRVGRGIGSGFGKTSGRGHKGQKSRSGCKIRR. Residues 11–20 are compositionally biased toward basic residues; it reads KSHKKSKRVG. Over residues 21-31 the composition is skewed to gly residues; sequence RGIGSGFGKTS. Over residues 32-47 the composition is skewed to basic residues; it reads GRGHKGQKSRSGCKIR.

The protein belongs to the universal ribosomal protein uL15 family. As to quaternary structure, part of the 50S ribosomal subunit.

Functionally, binds to the 23S rRNA. This is Large ribosomal subunit protein uL15 from Buchnera aphidicola subsp. Baizongia pistaciae (strain Bp).